The following is a 467-amino-acid chain: tRNA dimethylallyltransferase (467 aa).

The transit peptide at 1 to 47 (MASVAAARAVPVGSGLRGLQRTLPLVVILGATGTGKSTLALQLGQRL) directs the protein to the mitochondrion. 32 to 37 (TGTGKS) is a binding site for dimethylallyl diphosphate. Interaction with substrate tRNA stretches follow at residues 55–58 (DSMQ) and 183–187 (RKVAR). The tract at residues 221–230 (FSNPCILWLH) is core aggregation region. The interaction with isopentenylpyrophosphate transferase stretch occupies residues 233 to 255 (QAVLDERLDKRVDDMLAAGLLEE). Interaction with substrate tRNA stretches follow at residues 281-283 (QSI) and 313-331 (ALKQVTKRYARKQNRWVKN). A Matrin-type zinc finger spans residues 395–425 (HLCDLCDRIIIGDREWAAHIKSKSHLNQLKK). Positions 429 to 467 (LDSDAVNTIESQSVSPDHNKEPKEKGSPGQNDQELKCSV) are disordered. A compositionally biased stretch (polar residues) spans 433 to 444 (AVNTIESQSVSP). Residue Ser-443 is modified to Phosphoserine. Residues 445–454 (DHNKEPKEKG) show a composition bias toward basic and acidic residues. Position 455 is a phosphoserine (Ser-455).

The protein belongs to the IPP transferase family.

The protein resides in the mitochondrion. It localises to the cytoplasm. It catalyses the reaction adenosine(37) in tRNA + dimethylallyl diphosphate = N(6)-dimethylallyladenosine(37) in tRNA + diphosphate. Functionally, catalyzes the transfer of a dimethylallyl group onto the adenine at position 37 of both cytosolic and mitochondrial tRNAs, leading to the formation of N6-(dimethylallyl)adenosine (i6A37). Mediates modification of a limited subset of tRNAs: tRNA(Ser)(AGA), tRNA(Ser)(CGA), tRNA(Ser)(UGA), as well as partial modification of the selenocysteine tRNA(Ser)(UCA). TRIT1 is therefore required for selenoprotein expression. The sequence is that of tRNA dimethylallyltransferase (TRIT1) from Homo sapiens (Human).